The primary structure comprises 187 residues: Protein GrpE (187 aa).

The disordered stretch occupies residues 1-23; the sequence is MNNEKELKKEETSVENKEKKVAT.

Belongs to the GrpE family. In terms of assembly, homodimer.

Its subcellular location is the cytoplasm. Participates actively in the response to hyperosmotic and heat shock by preventing the aggregation of stress-denatured proteins, in association with DnaK and GrpE. It is the nucleotide exchange factor for DnaK and may function as a thermosensor. Unfolded proteins bind initially to DnaJ; upon interaction with the DnaJ-bound protein, DnaK hydrolyzes its bound ATP, resulting in the formation of a stable complex. GrpE releases ADP from DnaK; ATP binding to DnaK triggers the release of the substrate protein, thus completing the reaction cycle. Several rounds of ATP-dependent interactions between DnaJ, DnaK and GrpE are required for fully efficient folding. The sequence is that of Protein GrpE from Mesoplasma florum (strain ATCC 33453 / NBRC 100688 / NCTC 11704 / L1) (Acholeplasma florum).